A 163-amino-acid polypeptide reads, in one-letter code: NADH-quinone oxidoreductase subunit J (163 aa).

5 consecutive transmembrane segments (helical) span residues 1–21 (MEFVFYACSLIAVISTLLVII), 30–50 (LYLIISLLSISGIFFIFGAFF), 54–74 (LEVVIYAGAIIVLFVFVIMML), 94–114 (IGPSFLSLILFLLMTYAIFFV), and 138–158 (LLLVELSSLLLLSALVVVFHI).

It belongs to the complex I subunit 6 family. As to quaternary structure, composed of 13 different subunits. Subunits NuoA, H, J, K, L, M, N constitute the membrane sector of the complex.

The protein resides in the cell membrane. It carries out the reaction a quinone + NADH + 5 H(+)(in) = a quinol + NAD(+) + 4 H(+)(out). In terms of biological role, NDH-1 shuttles electrons from NADH, via FMN and iron-sulfur (Fe-S) centers, to quinones in the respiratory chain. Couples the redox reaction to proton translocation (for every two electrons transferred, four hydrogen ions are translocated across the cytoplasmic membrane), and thus conserves the redox energy in a proton gradient. This chain is NADH-quinone oxidoreductase subunit J (nuoJ), found in Buchnera aphidicola subsp. Schizaphis graminum (strain Sg).